A 380-amino-acid chain; its full sequence is Pectinesterase QRT1 (380 aa).

The N-terminal stretch at 1–26 (MKVEAFIPAVLLLCFGVMLCLKSSCA) is a signal peptide. Residues Asn-74 and Asn-137 are each glycosylated (N-linked (GlcNAc...) asparagine). 2 residues coordinate substrate: Thr-164 and Gln-198. The active-site Proton donor is Asp-221. N-linked (GlcNAc...) asparagine glycosylation occurs at Asn-227. A disulfide bridge connects residues Cys-235 and Cys-255. The active-site Nucleophile is Asp-242. Residues Arg-298 and Trp-300 each contribute to the substrate site. Asn-302 is a glycosylation site (N-linked (GlcNAc...) asparagine).

It belongs to the pectinesterase family. Expressed in flower buds, siliques, developing guard cells, floral nectares, at the stigmatic surface, in the hypocotyl-root transition zone and the area of lateral root emergence. Not expressed in mature leaves.

It is found in the secreted. The protein resides in the cell wall. The catalysed reaction is [(1-&gt;4)-alpha-D-galacturonosyl methyl ester](n) + n H2O = [(1-&gt;4)-alpha-D-galacturonosyl](n) + n methanol + n H(+). Its pathway is glycan metabolism; pectin degradation; 2-dehydro-3-deoxy-D-gluconate from pectin: step 1/5. Functionally, pectinesterase required for cell type-specific pectin degradation to separate microspores. The sequence is that of Pectinesterase QRT1 from Arabidopsis thaliana (Mouse-ear cress).